The chain runs to 366 residues: Fructose-bisphosphate aldolase 1 (366 aa).

Substrate-binding residues include Arg-56 and Lys-147. Residue Glu-189 is the Proton acceptor of the active site. Lys-231 functions as the Schiff-base intermediate with dihydroxyacetone-P in the catalytic mechanism.

The protein belongs to the class I fructose-bisphosphate aldolase family. Ubiquitous.

The enzyme catalyses beta-D-fructose 1,6-bisphosphate = D-glyceraldehyde 3-phosphate + dihydroxyacetone phosphate. The protein operates within carbohydrate degradation; glycolysis; D-glyceraldehyde 3-phosphate and glycerone phosphate from D-glucose: step 4/4. In terms of biological role, may be involved in the metabolism of fructose-bisphosphate (beta-D-fructose 1,6-bisphosphate) and of fructose 1-phosphate. This Caenorhabditis elegans protein is Fructose-bisphosphate aldolase 1 (aldo-1).